Reading from the N-terminus, the 411-residue chain is Secretion apparatus protein BsaZ (411 aa).

Helical transmembrane passes span 28-48, 80-100, 137-157, and 175-195; these read IVAL…VDLT, IAAP…LVQS, ALLY…LYHA, and IVLT…VLIL. A disordered region spans residues 341 to 411; that stretch reads AANRGGPPPE…APARTGDQNA (71 aa). Over residues 370-404 the composition is skewed to low complexity; it reads DACADNAFPDDAPPGAAAPNAGSPDGPAPDGGAPA.

Belongs to the type III secretion exporter family.

The protein resides in the cell membrane. Part of the bsa type III secretion system, is involved in the intracellular replication of invading bacteria inside the host cell. Probably necessary for the lysis of the vacuole membrane and escape into the host cell cytoplasm. The chain is Secretion apparatus protein BsaZ (bsaZ) from Burkholderia pseudomallei (strain K96243).